Consider the following 91-residue polypeptide: Putative membrane protein insertion efficiency factor (91 aa).

Belongs to the UPF0161 family.

The protein localises to the cell inner membrane. In terms of biological role, could be involved in insertion of integral membrane proteins into the membrane. This is Putative membrane protein insertion efficiency factor from Saccharophagus degradans (strain 2-40 / ATCC 43961 / DSM 17024).